The sequence spans 84 residues: ATP synthase subunit c (84 aa).

2 helical membrane-spanning segments follow: residues 9–29 and 54–74; these read IFGS…GFSL and IVAG…LLFI.

Belongs to the ATPase C chain family. In terms of assembly, F-type ATPases have 2 components, F(1) - the catalytic core - and F(0) - the membrane proton channel. F(1) has five subunits: alpha(3), beta(3), gamma(1), delta(1), epsilon(1). F(0) has three main subunits: a(1), b(2) and c(10-14). The alpha and beta chains form an alternating ring which encloses part of the gamma chain. F(1) is attached to F(0) by a central stalk formed by the gamma and epsilon chains, while a peripheral stalk is formed by the delta and b chains.

It localises to the cell inner membrane. Functionally, f(1)F(0) ATP synthase produces ATP from ADP in the presence of a proton or sodium gradient. F-type ATPases consist of two structural domains, F(1) containing the extramembraneous catalytic core and F(0) containing the membrane proton channel, linked together by a central stalk and a peripheral stalk. During catalysis, ATP synthesis in the catalytic domain of F(1) is coupled via a rotary mechanism of the central stalk subunits to proton translocation. Its function is as follows. Key component of the F(0) channel; it plays a direct role in translocation across the membrane. A homomeric c-ring of between 10-14 subunits forms the central stalk rotor element with the F(1) delta and epsilon subunits. This chain is ATP synthase subunit c, found in Histophilus somni (strain 129Pt) (Haemophilus somnus).